The chain runs to 564 residues: Copine-8 (564 aa).

2 consecutive C2 domains span residues 1 to 133 (MDSR…RLEK) and 142 to 265 (KCGT…FNVY). Residues Asp-39, Asp-45, Asp-99, Asp-101, Ser-104, Lys-109, Asp-111, Asp-173, Asp-179, Asp-235, Asp-237, and Asp-243 each coordinate Ca(2+). Position 260 is a phosphoserine (Ser-260). The VWFA domain maps to 309–510 (NFTVAIDFTA…VQFVPFRDYI (202 aa)).

It belongs to the copine family. Requires Ca(2+) as cofactor.

Functionally, probable calcium-dependent phospholipid-binding protein that may play a role in calcium-mediated intracellular processes. The chain is Copine-8 from Homo sapiens (Human).